A 63-amino-acid chain; its full sequence is MKASELREKSVEELNAELLGLLREQFNLRMQHATGQLTQTNQLKLVRRNIARVKTIITSKAGV.

Belongs to the universal ribosomal protein uL29 family.

The chain is Large ribosomal subunit protein uL29 from Shewanella frigidimarina (strain NCIMB 400).